A 321-amino-acid polypeptide reads, in one-letter code: Beta-1,3-N-acetylglucosaminyltransferase manic fringe (321 aa).

Over 1 to 7 (MQCRLPR) the chain is Cytoplasmic. The helical; Signal-anchor for type II membrane protein transmembrane segment at 8-27 (GLAGALLTLLCMGLLCLRYH) threads the bilayer. Topologically, residues 28–321 (LNLSPQRVQG…TPWCPQLGAR (294 aa)) are lumenal. Arginine 70 lines the substrate pocket. N-linked (GlcNAc...) asparagine glycosylation occurs at asparagine 109. Cystine bridges form between cysteine 110/cysteine 121 and cysteine 139/cysteine 202. Aspartate 143 contributes to the substrate binding site. Aspartate 144 contacts Mn(2+). Asparagine 185 carries an N-linked (GlcNAc...) asparagine glycan. Residue aspartate 232 is part of the active site. Histidine 256 contacts Mn(2+). A disulfide bond links cysteine 306 and cysteine 315.

It belongs to the glycosyltransferase 31 family. Mn(2+) is required as a cofactor.

Its subcellular location is the golgi apparatus membrane. It carries out the reaction 3-O-(alpha-L-fucosyl)-L-threonyl-[EGF-like domain protein] + UDP-N-acetyl-alpha-D-glucosamine = 3-O-(N-acetyl-beta-D-glucosaminyl-(1-&gt;3)-alpha-L-fucosyl)-L-threonyl-[EGF-like domain protein] + UDP + H(+). The catalysed reaction is 3-O-(alpha-L-fucosyl)-L-seryl-[EGF-like domain protein] + UDP-N-acetyl-alpha-D-glucosamine = 3-O-(N-acetyl-beta-D-glucosaminyl-(1-&gt;3)-alpha-L-fucosyl)-L-seryl-[EGF-like domain protein] + UDP + H(+). Glycosyltransferase that initiates the elongation of O-linked fucose residues attached to EGF-like repeats in the extracellular domain of Notch molecules. Modulates NOTCH1 activity by modifying O-fucose residues at specific EGF-like domains resulting in inhibition of NOTCH1 activation by JAG1 and enhancement of NOTCH1 activation by DLL1 via an increase in its binding to DLL1. This Homo sapiens (Human) protein is Beta-1,3-N-acetylglucosaminyltransferase manic fringe.